The chain runs to 527 residues: Phosphoenolpyruvate carboxykinase (ATP) (527 aa).

Substrate contacts are provided by Arg56, Tyr191, and Lys197. Residues Lys197, His216, and 232–240 (GLSGTGKTT) each bind ATP. Residues Lys197 and His216 each contribute to the Mn(2+) site. Residue Asp253 participates in Mn(2+) binding. Residues Glu281, Arg318, 437-438 (RI), and Thr443 each bind ATP. Position 318 (Arg318) interacts with substrate.

The protein belongs to the phosphoenolpyruvate carboxykinase (ATP) family. It depends on Mn(2+) as a cofactor.

The protein resides in the cytoplasm. The enzyme catalyses oxaloacetate + ATP = phosphoenolpyruvate + ADP + CO2. It functions in the pathway carbohydrate biosynthesis; gluconeogenesis. Involved in the gluconeogenesis. Catalyzes the conversion of oxaloacetate (OAA) to phosphoenolpyruvate (PEP) through direct phosphoryl transfer between the nucleoside triphosphate and OAA. The protein is Phosphoenolpyruvate carboxykinase (ATP) of Shouchella clausii (strain KSM-K16) (Alkalihalobacillus clausii).